A 447-amino-acid polypeptide reads, in one-letter code: Phosphoglucosamine mutase (447 aa).

Residue Ser-104 is the Phosphoserine intermediate of the active site. Mg(2+) contacts are provided by Ser-104, Asp-243, Asp-245, and Asp-247. Ser-104 carries the post-translational modification Phosphoserine.

Belongs to the phosphohexose mutase family. Requires Mg(2+) as cofactor. Activated by phosphorylation.

The catalysed reaction is alpha-D-glucosamine 1-phosphate = D-glucosamine 6-phosphate. Functionally, catalyzes the conversion of glucosamine-6-phosphate to glucosamine-1-phosphate. The polypeptide is Phosphoglucosamine mutase (Corynebacterium aurimucosum (strain ATCC 700975 / DSM 44827 / CIP 107346 / CN-1) (Corynebacterium nigricans)).